Reading from the N-terminus, the 388-residue chain is Processive diacylglycerol beta-glucosyltransferase (388 aa).

The protein belongs to the glycosyltransferase 28 family. UgtP subfamily.

Its subcellular location is the cell membrane. It catalyses the reaction a 1,2-diacyl-3-O-(beta-D-glucopyranosyl)-sn-glycerol + UDP-alpha-D-glucose = a 1,2-diacyl-3-O-(beta-D-Glc-(1-&gt;6)-beta-D-Glc)-sn-glycerol + UDP + H(+). It carries out the reaction a 1,2-diacyl-3-O-(beta-D-Glc-(1-&gt;6)-beta-D-Glc)-sn-glycerol + UDP-alpha-D-glucose = a 1,2-diacyl-3-O-(beta-D-Glc-(1-&gt;6)-beta-D-Glc-(1-&gt;6)-beta-D-Glc)-sn-glycerol + UDP + H(+). The enzyme catalyses a 1,2-diacyl-sn-glycerol + UDP-alpha-D-glucose = a 1,2-diacyl-3-O-(beta-D-glucopyranosyl)-sn-glycerol + UDP + H(+). It functions in the pathway glycolipid metabolism; diglucosyl-diacylglycerol biosynthesis. In terms of biological role, processive glucosyltransferase involved in the biosynthesis of both the bilayer- and non-bilayer-forming membrane glucolipids. Is able to successively transfer up to three glucosyl residues to diacylglycerol (DAG), thereby catalyzing the formation of beta-monoglucosyl-DAG (3-O-(beta-D-glucopyranosyl)-1,2-diacyl-sn-glycerol), beta-diglucosyl-DAG (3-O-(beta-D-glucopyranosyl-beta-(1-&gt;6)-D-glucopyranosyl)-1,2-diacyl-sn-glycerol) and beta-triglucosyl-DAG (3-O-(beta-D-glucopyranosyl-beta-(1-&gt;6)-D-glucopyranosyl-beta-(1-&gt;6)-D-glucopyranosyl)-1,2-diacyl-sn-glycerol). Beta-diglucosyl-DAG is the predominant glycolipid found in Bacillales and is also used as a membrane anchor for lipoteichoic acid (LTA). The protein is Processive diacylglycerol beta-glucosyltransferase of Bacillus cereus (strain AH187).